The sequence spans 214 residues: MAELLNVKPTRMELLNLKRRIQLAKKGHKLLKDKQDALIMEFFTIYDEALQLRRELNEKMGVAFETLTRAQIEAGTLPLREAALAVKPNKEVEIKRRNVMGVSVPLIEAEGFKRKASERGYAFVSTSPFVDIAAEKFEEVLDLAVRLAEVEETLKRLAREIETTKRRVNALEYIIIPRMEATVKFIKQRLDEMERENFFRLKRVKALIEARSGS.

The protein belongs to the V-ATPase D subunit family. As to quaternary structure, has multiple subunits with at least A(3), B(3), C, D, E, F, H, I and proteolipid K(x).

The protein resides in the cell membrane. Its function is as follows. Component of the A-type ATP synthase that produces ATP from ADP in the presence of a proton gradient across the membrane. This Thermococcus gammatolerans (strain DSM 15229 / JCM 11827 / EJ3) protein is A-type ATP synthase subunit D.